Consider the following 285-residue polypeptide: Nucleotide-binding protein PFL_0912 (285 aa).

Glycine 8–serine 15 contacts ATP. Position 60-63 (aspartate 60–asparagine 63) interacts with GTP.

The protein belongs to the RapZ-like family.

Functionally, displays ATPase and GTPase activities. This is Nucleotide-binding protein PFL_0912 from Pseudomonas fluorescens (strain ATCC BAA-477 / NRRL B-23932 / Pf-5).